The primary structure comprises 402 residues: NAD-dependent protein deacetylase sirtuin-7 (402 aa).

The segment at 1 to 23 is disordered; the sequence is MAAGGGLSRSERKAAERVRRLRE. The span at 9-23 shows a compositional bias: basic and acidic residues; the sequence is RSERKAAERVRRLRE. The region spanning 83–330 is the Deacetylase sirtuin-type domain; sequence PEELRRKVRE…QLLMNELGLE (248 aa). NAD(+) contacts are provided by residues 108–127 and 168–171; these read GAGISTAASIPDYRGPNGVW and QNCD. His-188 (proton acceptor) is an active-site residue. Residues Cys-196, Cys-199, Cys-226, and Cys-229 each coordinate Zn(2+). Residues 269–271, 298–300, and Cys-316 each bind NAD(+); these read GSS and NLQ. Positions 355 to 402 are disordered; it reads SHSRKSLCRSREEAPPGDQSDPLASAPPILGGWFGRGCAKRAKRKKVA. Position 390 is an asymmetric dimethylarginine; alternate (Arg-390). An Omega-N-methylarginine; alternate modification is found at Arg-390. Basic residues predominate over residues 392–402; it reads CAKRAKRKKVA.

Belongs to the sirtuin family. Class IV subfamily. As to quaternary structure, interacts with UBTF and the RNA polymerase I complex. Interacts with components of the B-WICH complex, such as MYBBP1A, SMARCA5/SNF2H and BAZ1B/WSTF. Interacts with ELK4, leading to stabilization at target promoters for H3K18Ac deacetylation. Interacts with histone H2A and/or histone H2B. Interacts with DNMT1. Interacts with SIRT1. Requires Zn(2+) as cofactor. Post-translationally, phosphorylated during mitosis. In terms of processing, methylation at Arg-390 by PRMT6 inhibits the H3K18Ac histone deacetylase activity, promoting mitochondria biogenesis and maintaining mitochondria respiration. Ubiquitinated via 'Lys-63'-linked ubiquitin chains. Deubiquitinated by USP7, inhibiting the H3K18Ac histone deacetylase activity and regulating gluconeogenesis. Ubiquitinated by E3 ubiquitin-protein ligase complex containing FBXO7; leading to proteasomal degradation. As to expression, detected in liver, spleen and testis. Detected in embryos.

Its subcellular location is the nucleus. It is found in the nucleolus. It localises to the nucleoplasm. The protein resides in the chromosome. The protein localises to the cytoplasm. It carries out the reaction N(6)-acetyl-L-lysyl-[protein] + NAD(+) + H2O = 2''-O-acetyl-ADP-D-ribose + nicotinamide + L-lysyl-[protein]. The enzyme catalyses N(6)-glutaryl-L-lysyl-[protein] + NAD(+) + H2O = 2''-O-glutaryl-ADP-D-ribose + nicotinamide + L-lysyl-[protein]. It catalyses the reaction N(6)-succinyl-L-lysyl-[protein] + NAD(+) + H2O = 2''-O-succinyl-ADP-D-ribose + nicotinamide + L-lysyl-[protein]. The catalysed reaction is N(6)-propanoyl-L-lysyl-[protein] + NAD(+) + H2O = 3''-O-propanoyl-ADP-D-ribose + nicotinamide + L-lysyl-[protein]. It carries out the reaction N(6)-decanoyl-L-lysyl-[protein] + NAD(+) + H2O = 2''-O-decanoyl-ADP-D-ribose + nicotinamide + L-lysyl-[protein]. With respect to regulation, NAD-dependent protein-lysine deacetylase and deacylase activities are activated by nucleic acids. Histone deacetylase activity is activated by DNA. Protein-lysine deacylase activity is activated by RNA. H3K18Ac histone deacetylase activity is inhibited by methylation at Arg-390. H3K18Ac histone deacetylase activity is inhibited by deubiquitination by USP7. Functionally, NAD-dependent protein-lysine deacylase that can act both as a deacetylase or deacylase (desuccinylase, depropionylase and deglutarylase), depending on the context. Also acts as a dedecanoylase. Specifically mediates deacetylation of histone H3 at 'Lys-18' (H3K18Ac). In contrast to other histone deacetylases, displays strong preference for a specific histone mark, H3K18Ac, directly linked to control of gene expression. H3K18Ac is mainly present around the transcription start site of genes and has been linked to activation of nuclear hormone receptors; SIRT7 thereby acts as a transcription repressor. Moreover, H3K18 hypoacetylation has been reported as a marker of malignancy in various cancers and seems to maintain the transformed phenotype of cancer cells. Also able to mediate deacetylation of histone H3 at 'Lys-36' (H3K36Ac) in the context of nucleosomes. Also mediates deacetylation of non-histone proteins, such as ATM, CDK9, DDX21, DDB1, FBL, FKBP5/FKBP51, GABPB1, RAN, RRP9/U3-55K and POLR1E/PAF53. Enriched in nucleolus where it stimulates transcription activity of the RNA polymerase I complex. Acts by mediating the deacetylation of the RNA polymerase I subunit POLR1E/PAF53, thereby promoting the association of RNA polymerase I with the rDNA promoter region and coding region. In response to metabolic stress, SIRT7 is released from nucleoli leading to hyperacetylation of POLR1E/PAF53 and decreased RNA polymerase I transcription. Required to restore the transcription of ribosomal RNA (rRNA) at the exit from mitosis. Promotes pre-ribosomal RNA (pre-rRNA) cleavage at the 5'-terminal processing site by mediating deacetylation of RRP9/U3-55K, a core subunit of the U3 snoRNP complex. Mediates 'Lys-37' deacetylation of Ran, thereby regulating the nuclear export of NF-kappa-B subunit RELA/p65. Acts as a regulator of DNA damage repair by mediating deacetylation of ATM during the late stages of DNA damage response, promoting ATM dephosphorylation and deactivation. May also deacetylate p53/TP53 and promotes cell survival, however such data need additional confirmation. Suppresses the activity of the DCX (DDB1-CUL4-X-box) E3 ubiquitin-protein ligase complexes by mediating deacetylation of DDB1, which prevents the interaction between DDB1 and CUL4 (CUL4A or CUL4B). Activates RNA polymerase II transcription by mediating deacetylation of CDK9, thereby promoting 'Ser-2' phosphorylation of the C-terminal domain (CTD) of RNA polymerase II. Deacetylates FBL, promoting histone-glutamine methyltransferase activity of FBL. Acts as a regulator of mitochondrial function by catalyzing deacetylation of GABPB1. Regulates Akt/AKT1 activity by mediating deacetylation of FKBP5/FKBP51. Required to prevent R-loop-associated DNA damage and transcription-associated genomic instability by mediating deacetylation and subsequent activation of DDX21, thereby overcoming R-loop-mediated stalling of RNA polymerases. In addition to protein deacetylase activity, also acts as protein-lysine deacylase. Acts as a protein depropionylase by mediating depropionylation of Osterix (SP7), thereby regulating bone formation by osteoblasts. Acts as a histone deglutarylase by mediating deglutarylation of histone H4 on 'Lys-91' (H4K91glu); a mark that destabilizes nucleosomes by promoting dissociation of the H2A-H2B dimers from nucleosomes. Acts as a histone desuccinylase: in response to DNA damage, recruited to DNA double-strand breaks (DSBs) and catalyzes desuccinylation of histone H3 on 'Lys-122' (H3K122succ), thereby promoting chromatin condensation and DSB repair. Also promotes DSB repair by promoting H3K18Ac deacetylation, regulating non-homologous end joining (NHEJ). Along with its role in DNA repair, required for chromosome synapsis during prophase I of female meiosis by catalyzing H3K18Ac deacetylation. Involved in transcriptional repression of LINE-1 retrotransposon via H3K18Ac deacetylation, and promotes their association with the nuclear lamina. Required to stabilize ribosomal DNA (rDNA) heterochromatin and prevent cellular senescence induced by rDNA instability. Acts as a negative regulator of SIRT1 by preventing autodeacetylation of SIRT1, restricting SIRT1 deacetylase activity. In Mus musculus (Mouse), this protein is NAD-dependent protein deacetylase sirtuin-7.